Reading from the N-terminus, the 397-residue chain is uncharacterized protein (397 aa).

4 helical membrane-spanning segments follow: residues 255–275 (LLTY…ICYA), 284–304 (MITF…VLLA), 308–328 (LITA…PLPL), and 370–390 (VLLV…YCLG).

The protein resides in the cell membrane. This is an uncharacterized protein from Methanocaldococcus jannaschii (strain ATCC 43067 / DSM 2661 / JAL-1 / JCM 10045 / NBRC 100440) (Methanococcus jannaschii).